The primary structure comprises 1605 residues: Sister chromatid cohesion protein PDS5 homolog A (1605 aa).

14 HEAT repeats span residues 50-89 (KSIQPFLDAVIKPEILNHQDKDVKLLVASCVSEITRITAP), 96-136 (NIMK…YRSC), 146-183 (DLVKEVFTTFLDVARDDHPEIVFSSMQNIMIVLLEESE), 184-221 (DVQEHLLLILLSKLGRNRSDVRDAARRLAMKVIEHCAP), 261-298 (QALSGVAPYLTGELLADKLETRLKVVGLVGELFSLPGR), 302-339 (EEFDSIFLEFLKRLTDRVVEVRMAILDHIKDCLLSDPL), 341-378 (AEASQIISALCDRLLDYDENIRKQVVAVICDVSVSALT), 380-416 (IPVDTMKLVAERLRDKAILVKTYTMERLTELFRVYCL), 552-591 (ANIWKILTNLLDPNTSITQASRIRDDMLKILSEKHSLYDF), 644-681 (SLFDGAEEELISFLKDDDEMMKEGTLKILAKAGGTIRE), 723-758 (KSLSVLYKRLVDMLEDKRYQPAVLQCLGCIAQIAMP), 821-860 (AGVDDLLGILKNILSFGEVSEDLESSSVDKAHLRLAAAKA), 961-1000 (LYPHHILPYLVHALAHHSCPDVEKCKDVKEYEMIYRQLYL), and 1050-1088 (HAICELGLSIINHLTQKEPDLQGEITPVSLPPTLYKPSE). 2 disordered regions span residues 1155-1182 (LRAQGTKTRKGKKNKSVPAEDENGKNDV) and 1203-1262 (ESSN…PKVQ). Basic and acidic residues predominate over residues 1211 to 1225 (SPSERAEICQRDQKG). The Nuclear localization signal 1 signature appears at 1226 to 1233 (NKRNVGDA). Phosphoserine is present on Ser-1274. Basic and acidic residues predominate over residues 1279 to 1295 (NVSLDSHDENSDQEKML). 3 disordered regions span residues 1279–1307 (NVSLDSHDENSDQEKMLESISPRKRKKSL), 1324–1353 (ERSRSAGGGDSKLKSASGSMKKRKNVSGLA), and 1423–1605 (GKTA…RTAI). Ser-1299 carries the phosphoserine modification. 2 stretches are compositionally biased toward basic residues: residues 1425–1442 (TAKKSRTSKGNSKKKRSS) and 1464–1476 (KGKRTPKKNLKQL). Residues 1426–1433 (AKKSRTSK) carry the Nuclear localization signal 2 motif. Basic and acidic residues-rich tracts occupy residues 1477–1495 (HPKDTPKSLSLEHEKVESR), 1514–1527 (GEEKSESEGKSLKE), and 1534–1574 (VVNK…NEME). Phosphoserine occurs at positions 1524, 1562, and 1584. Residues 1575–1585 (REAEENAETSD) are compositionally biased toward acidic residues. Residue Thr-1588 is modified to Phosphothreonine.

Belongs to the PDS5 family. As to quaternary structure, interacts with the cohesin complex. Interacts with DEK3.

Its subcellular location is the nucleus. Its function is as follows. Cohesin cofactor dispensable during the meiotic division but playing an important role in DNA repair by homologous recombination (HR) probably by helping SMC5/SMC6 complex. Regulator of sister chromatid cohesion in mitosis which may stabilize cohesin complex association with chromatin. May couple sister chromatid cohesion during mitosis to DNA replication. Cohesion ensures that chromosome partitioning is accurate in both meiotic and mitotic cells and plays an important role in DNA repair. This is Sister chromatid cohesion protein PDS5 homolog A from Arabidopsis thaliana (Mouse-ear cress).